Reading from the N-terminus, the 226-residue chain is MGIIKFDKVTQVFGDLCVLRDITVQLTEKRIAVIGANGSGKSTFVRLINGLQLPSNGFVSVDGLDTKRDAKAVKRKVGFVFQNPDNQIVLPLVEEDLSFGLKNLNLSKDEIKKRVDEILQRYDLQAFKNHAVHLLSGGQKQLVAISSVVAMKPDYIVFDEPTTLLDLRNKRRVTQVIEELPQTAIVVSHDLEFLKNFDRILVFDKGEIAIDDVPLVAIKEYIRRMS.

In terms of domain architecture, ABC transporter spans 4 to 225; that stretch reads IKFDKVTQVF…VAIKEYIRRM (222 aa). ATP is bound at residue 35-42; sequence GANGSGKS.

Belongs to the ABC transporter superfamily.

The protein localises to the cell inner membrane. Probably part of an ABC transporter complex. Responsible for energy coupling to the transport system. The sequence is that of Putative ABC transporter ATP-binding protein BQ02700 from Bartonella quintana (strain Toulouse) (Rochalimaea quintana).